Here is a 421-residue protein sequence, read N- to C-terminus: ATP-dependent RNA helicase RhlB (421 aa).

Residues 9 to 37 (QKFSDFALHPVVVQALEKKGFYNCTPIQA) carry the Q motif motif. Residues 40–219 (LPLTLAGRDV…FEQMNNAEYV (180 aa)) form the Helicase ATP-binding domain. 53-60 (AQTGTGKT) provides a ligand contact to ATP. The short motif at 165–168 (DEAD) is the DEAD box element. The Helicase C-terminal domain maps to 245–390 (RLLQTLIEEE…VSKYNPDALL (146 aa)). A disordered region spans residues 390-421 (LSELPPPKRLSRPRTGNGPRRSGAPRNRRRTG). Residues 405–414 (GNGPRRSGAP) are compositionally biased toward low complexity.

Belongs to the DEAD box helicase family. RhlB subfamily. In terms of assembly, component of the RNA degradosome, which is a multiprotein complex involved in RNA processing and mRNA degradation.

It localises to the cytoplasm. It carries out the reaction ATP + H2O = ADP + phosphate + H(+). In terms of biological role, DEAD-box RNA helicase involved in RNA degradation. Has RNA-dependent ATPase activity and unwinds double-stranded RNA. The protein is ATP-dependent RNA helicase RhlB of Cronobacter sakazakii (strain ATCC BAA-894) (Enterobacter sakazakii).